The following is a 338-amino-acid chain: MKVFYDKDCDLSLIKGKNVAIIGYGSQGHAHAQNLNDSGVKVTVGLRKGGASWDKVKNAGLNVAEVNDAVKAADVIMILLPDENIAQVYNENVAPYAKQGAVLAFAHGFNVHYGQVVPRADLDVIMIAPKAPGHTVRGTYSQGGGVPHLIAVYQDKSGVARDIALSYAMANGGGRAGIIETNFREETETDLFGEQAVLCGGAVELIKAGFETLTEAGYAPEMAYFECLHELKLIVDLIYEGGIANMNYSISNNAEYGEYVTGPKVVTEDTKNAMRQCLKDIQTGEYAKSFILENKAGAPTLISRRRLTAEHQIEEVGAKLRAMMPWIAKNKLVDQTKN.

Residues 1–181 (MKVFYDKDCD…GGGRAGIIET (181 aa)) enclose the KARI N-terminal Rossmann domain. Residues 24–27 (YGSQ), arginine 47, and serine 52 each bind NADP(+). Residue histidine 107 is part of the active site. NADP(+) is bound at residue glycine 133. The region spanning 182–327 (NFREETETDL…AKLRAMMPWI (146 aa)) is the KARI C-terminal knotted domain. Aspartate 190, glutamate 194, glutamate 226, and glutamate 230 together coordinate Mg(2+). Serine 251 is a substrate binding site.

The protein belongs to the ketol-acid reductoisomerase family. It depends on Mg(2+) as a cofactor.

The catalysed reaction is (2R)-2,3-dihydroxy-3-methylbutanoate + NADP(+) = (2S)-2-acetolactate + NADPH + H(+). The enzyme catalyses (2R,3R)-2,3-dihydroxy-3-methylpentanoate + NADP(+) = (S)-2-ethyl-2-hydroxy-3-oxobutanoate + NADPH + H(+). It functions in the pathway amino-acid biosynthesis; L-isoleucine biosynthesis; L-isoleucine from 2-oxobutanoate: step 2/4. Its pathway is amino-acid biosynthesis; L-valine biosynthesis; L-valine from pyruvate: step 2/4. Functionally, involved in the biosynthesis of branched-chain amino acids (BCAA). Catalyzes an alkyl-migration followed by a ketol-acid reduction of (S)-2-acetolactate (S2AL) to yield (R)-2,3-dihydroxy-isovalerate. In the isomerase reaction, S2AL is rearranged via a Mg-dependent methyl migration to produce 3-hydroxy-3-methyl-2-ketobutyrate (HMKB). In the reductase reaction, this 2-ketoacid undergoes a metal-dependent reduction by NADPH to yield (R)-2,3-dihydroxy-isovalerate. This is Ketol-acid reductoisomerase (NADP(+)) from Janthinobacterium sp. (strain Marseille) (Minibacterium massiliensis).